We begin with the raw amino-acid sequence, 75 residues long: Kappa-conotoxin RIIIK (75 aa).

A signal peptide spans 1 to 19 (MSKLGVLLTICLLLFPLTA). A propeptide spanning residues 20–50 (LPMDGDQPVDRLAERMQDNISSEQHTFFEKR) is cleaved from the precursor. 4-hydroxyproline occurs at positions 52, 63, 65, and 71. Intrachain disulfides connect Cys54–Cys67, Cys55–Cys72, and Cys62–Cys73. Thr74 bears the Threonine amide mark.

It belongs to the conotoxin M superfamily. As to expression, expressed by the venom duct.

The protein resides in the secreted. Kappa-conotoxins inhibits voltage-gated potassium channels (Kv). This synthetic toxin reversibly inhibits the insect potassium channel Shaker K+, the teleost homolog TSha1 and the mammalian Kv1.2/KCNA2 channel. Interacts with the pore region of the insect channel, in a state-dependent manner. Causes seizure when intracerebrovascularly injected into mice. Is also toxic when intrathecally injected into mice, but shows no visible effects by intraperitoneal injection. Shows protective effects on cardiac tissue when administered after an ischemic event. This Conus radiatus (Rayed cone) protein is Kappa-conotoxin RIIIK.